Consider the following 466-residue polypeptide: MFSTEPRSDTAPGSPSCSETKRRKVRRGTHSCWECKRRKVKCSYSNPSDPRCIGCRRRGTKCLSQQDVDEGASVVSAAVDEDRRIGDRMVRVEALIEQLANQVVNRESEKVVGTNDSESDLATSCSPQDTQTLKHLLPQKVNSPSTCIEYAPVSAALHAALPPHEDINLIIKAGLDVSLHRLMTTSLATLSRCIDGFRAGLAEIPSVDTHPTLLARYLLILATCLQAAHPELHAKEIRCLSEPPRLAMRRLVNAATDLVTSKDELLSSVEGLECVMLESLYLANDGNLRRAWLVCRRAMAVAQLLGLHRVDSQQLPCLTFLSQSVDPRFLWFRIVCTDRQLCLMLGLPQGTPDVSMATESALANDSASGRFERKQCVIASRILERNEASGDFTNDDLATVLKLDEELQQAANEMPSSWWLVPNLASSLHDQNKTIWEMLRLIEQMLYFNLLNLLHLPCMLRARQPA.

Over residues 1 to 18 (MFSTEPRSDTAPGSPSCS) the composition is skewed to polar residues. Residues 1–22 (MFSTEPRSDTAPGSPSCSETKR) are disordered. A DNA-binding region (zn(2)-C6 fungal-type) is located at residues 32-62 (CWECKRRKVKCSYSNPSDPRCIGCRRRGTKC).

It is found in the nucleus. In terms of biological role, transcription factor; part of the gene cluster that mediates the biosynthesis of eupenifeldin, a bistropolone meroterpenoid that acts as an antitumor agent. The chain is Transcription factor eupR from Phoma sp.